A 312-amino-acid polypeptide reads, in one-letter code: Chitin deacetylase 2 (312 aa).

Residues 1 to 44 (MRIQLNTIDLQCIIALSCLGQFVHAEANREDLKQIDFQFPVLER) form the signal peptide. A disulfide bridge connects residues Cys-117 and Cys-300. One can recognise a NodB homology domain in the interval 118-307 (SKLSQTFDDG…SHCVGGIDYI (190 aa)). The active-site Proton acceptor is the Asp-125. Asp-125 is an acetate binding site. Residue Asp-126 coordinates Co(2+). An N-linked (GlcNAc...) asparagine glycan is attached at Asn-142. 2 residues coordinate Co(2+): His-172 and His-176. Residues Asn-181 and Asn-199 are each glycosylated (N-linked (GlcNAc...) asparagine). Tyr-213 provides a ligand contact to acetate. N-linked (GlcNAc...) asparagine glycosylation is found at Asn-246 and Asn-263. The active-site Proton donor is His-273.

This sequence belongs to the polysaccharide deacetylase family. As to quaternary structure, monomer. It depends on Co(2+) as a cofactor. In terms of processing, N-glycosylated.

The protein localises to the prospore. It catalyses the reaction [(1-&gt;4)-N-acetyl-beta-D-glucosaminyl](n) + n H2O = chitosan + n acetate. In terms of biological role, hydrolyzes the N-acetamido groups of N-acetyl-D-glucosamine residues in chitin to form chitosan and acetate. Chitosan is a component of the spore wall. The chain is Chitin deacetylase 2 from Saccharomyces cerevisiae (strain ATCC 204508 / S288c) (Baker's yeast).